A 735-amino-acid chain; its full sequence is Transcription factor RFX4 (735 aa).

Positions 25-59 are disordered; it reads SESKRFSSHSSIGNISNDENEEKENNRASKPHSTP. A DNA-binding region spans residues 44–126; it reads NEEKENNRAS…RRLGTRGQSK (83 aa). Positions 61–136 form a DNA-binding region, RFX-type winged-helix; it reads TLQWLEENYE…YHYYGIAVKE (76 aa). Residues 315-487 are necessary for dimerization; that stretch reads RFSQILKRQT…NELMRAMKGE (173 aa).

It belongs to the RFX family.

It localises to the nucleus. Its function is as follows. May activate transcription by interacting directly with the X-box. This chain is Transcription factor RFX4 (rfx4), found in Danio rerio (Zebrafish).